The primary structure comprises 111 residues: Somatostatin-1B (111 aa).

The N-terminal stretch at 1–19 is a signal peptide; that stretch reads MQLLSSLVSLLLVLYSVRA. The propeptide occupies 20-87; sequence AAVLPVEERN…RLEERAVYNR (68 aa). C100 and C111 are oxidised to a cystine.

The protein belongs to the somatostatin family.

It localises to the secreted. Somatostatin inhibits the release of somatotropin. The polypeptide is Somatostatin-1B (sst1b) (Carassius auratus (Goldfish)).